A 102-amino-acid polypeptide reads, in one-letter code: RNA-binding protein Hfq (102 aa).

In terms of domain architecture, Sm spans 9–68 (DPFLNALRRERVPVSIYLVNGIKLQGQIESFDQFVILLKNTVSQMVYKHAISTVVPSRPV). The interval 63–102 (VPSRPVSHHSNNAGGGTSNNYHHGSNAQGSGAQQDSEETE) is disordered. Over residues 70-96 (HHSNNAGGGTSNNYHHGSNAQGSGAQQ) the composition is skewed to polar residues.

Belongs to the Hfq family. As to quaternary structure, homohexamer.

Functionally, RNA chaperone that binds small regulatory RNA (sRNAs) and mRNAs to facilitate mRNA translational regulation in response to envelope stress, environmental stress and changes in metabolite concentrations. Also binds with high specificity to tRNAs. In Salmonella arizonae (strain ATCC BAA-731 / CDC346-86 / RSK2980), this protein is RNA-binding protein Hfq.